Consider the following 278-residue polypeptide: Undecaprenyl-diphosphatase (278 aa).

A run of 6 helical transmembrane segments spans residues 49-69 (ANTF…VVFW), 97-117 (HVLI…DFID), 120-140 (LFSI…MIAA), 197-217 (ADFT…LSLV), 226-246 (GDLG…LLSI), and 258-278 (LVPF…IVYM).

The protein belongs to the UppP family.

Its subcellular location is the cell membrane. It carries out the reaction di-trans,octa-cis-undecaprenyl diphosphate + H2O = di-trans,octa-cis-undecaprenyl phosphate + phosphate + H(+). In terms of biological role, catalyzes the dephosphorylation of undecaprenyl diphosphate (UPP). Confers resistance to bacitracin. This chain is Undecaprenyl-diphosphatase, found in Exiguobacterium sibiricum (strain DSM 17290 / CCUG 55495 / CIP 109462 / JCM 13490 / 255-15).